The following is a 496-amino-acid chain: Galactokinase (496 aa).

The residue at position 2 (Ala-2) is an N-acetylalanine. Residues Arg-56, Glu-62, His-63, and Asp-65 each coordinate alpha-D-galactose. ATP is bound by residues Gly-161, Gly-163, Ser-165, and Ser-166. Asp-210 contacts alpha-D-galactose. Asp-210 serves as the catalytic Proton acceptor. ATP-binding residues include Ser-252, Gln-253, and Lys-254. Tyr-262 contacts alpha-D-galactose.

This sequence belongs to the GHMP kinase family. GalK subfamily. Requires Mg(2+) as cofactor. The cofactor is Mn(2+). Ca(2+) is required as a cofactor. As to expression, expressed in roots, stems, leaves, flowers and young siliques. Higher expression in the elongating middle stem region than in the lower or upper stem region.

It carries out the reaction alpha-D-galactose + ATP = alpha-D-galactose 1-phosphate + ADP + H(+). Its pathway is carbohydrate metabolism; galactose metabolism. Its function is as follows. Sugar-1-kinase with a very high substrate specificity for the alpha-anomeric configuration of D-galacose (D-Gal). Also efficiently converts 2-deoxy-D-Gal to 2-deoxy-D-al-1-phosphate. In Arabidopsis thaliana (Mouse-ear cress), this protein is Galactokinase (GAL1).